Reading from the N-terminus, the 677-residue chain is Transketolase (677 aa).

H27 lines the substrate pocket. Residues H66 and 114 to 116 (GPL) contribute to the thiamine diphosphate site. D155 contacts Mg(2+). 2 residues coordinate thiamine diphosphate: G156 and N185. 2 residues coordinate Mg(2+): N185 and I187. Substrate is bound by residues H261, R356, and S383. H261 is a binding site for thiamine diphosphate. The thiamine diphosphate site is built by E415 and F442. E415 serves as the catalytic Proton donor. Positions 466, 474, and 525 each coordinate substrate.

Belongs to the transketolase family. As to quaternary structure, homodimer. It depends on Mg(2+) as a cofactor. Requires Ca(2+) as cofactor. Mn(2+) serves as cofactor. The cofactor is Co(2+). Thiamine diphosphate is required as a cofactor.

The enzyme catalyses D-sedoheptulose 7-phosphate + D-glyceraldehyde 3-phosphate = aldehydo-D-ribose 5-phosphate + D-xylulose 5-phosphate. In terms of biological role, catalyzes the transfer of a two-carbon ketol group from a ketose donor to an aldose acceptor, via a covalent intermediate with the cofactor thiamine pyrophosphate. This chain is Transketolase (TKT), found in Scheffersomyces stipitis (strain ATCC 58785 / CBS 6054 / NBRC 10063 / NRRL Y-11545) (Yeast).